The sequence spans 261 residues: tRNA pseudouridine synthase A (261 aa).

Aspartate 51 functions as the Nucleophile in the catalytic mechanism. Tyrosine 109 is a binding site for substrate.

It belongs to the tRNA pseudouridine synthase TruA family. As to quaternary structure, homodimer.

It catalyses the reaction uridine(38/39/40) in tRNA = pseudouridine(38/39/40) in tRNA. Formation of pseudouridine at positions 38, 39 and 40 in the anticodon stem and loop of transfer RNAs. The chain is tRNA pseudouridine synthase A from Tolumonas auensis (strain DSM 9187 / NBRC 110442 / TA 4).